We begin with the raw amino-acid sequence, 82 residues long: Putative membrane protein insertion efficiency factor (82 aa).

The protein belongs to the UPF0161 family.

The protein localises to the cell inner membrane. Could be involved in insertion of integral membrane proteins into the membrane. This is Putative membrane protein insertion efficiency factor from Rickettsia massiliae (strain Mtu5).